Here is a 936-residue protein sequence, read N- to C-terminus: MAQVAVTTQPTDEPSDGRMVVTFLMSALESMCKELAKSKAEVACIAVYETDVYVVGTERGCAFVNARQDLQKDFAQHCQGEGLPEEKPLCLGNGEACPGEAQLLRRAVQDHFCLCYRKALGTTAMVPVPYEQMLQDEAAVVVRGLPEGLAFQHPDNYSLATLKWILENKAGISFAVKRPFLGAESQLGGLGMVTDAGRPTVPPNDSYGPVSVKTEPMEDSGTSPRAAAMLIKTESEDPNYNVCNVQGSQHFSASSDVTGMELPSEESTRMVALETNEDPETEVKMEGNASPSNLVNSAAGVEDLRIIQVTVADNEKERLSGLEKIKQLREQVNDLFSRKFGEAIGVDFPVKVPYRKITFNPGCVVIDGMPPGVVFKAPGYLEISSMRRILDAADFIKFTVIRPLPGLELSNVGKRKIDQEGRVFQEKWERAYFFVEVQNIPTCLICKQSVSVSKEYNLRRHYQTNHSRHYDQYSGQAREEKLRELKRGLRKYLLGASEIVCPEQPFPNASPPTNSAVQPAEEVAGSLWEKLRQKIRSFVAYSIAIDEITDINDTTQLAIFIRGVDDNFDVSEELLDTVPMTGAKSGNEIFLRVEKSLKKFSIDWSKLVSVASTGTPAMMDANSGLVTKLRARAASCCKGADLKSVRCIIHPEWLCAQKLRMGHVMDVVVDSVNWICSRGLNHGDFTTLLYELDSQYGSLLYHTALKWLGRGLVLRRFFESLEEIDSFMSSRGKPVPQLSSRDWILDLAFLVDMTTHLNTLDASLQGHSQIVTQMYDFIRAFLAKLCLWETHLARNNLAHFPTLKSVSRSESDGLNYIPKIVELKAEFQRRLSDFKSCESELTLFSSPFSTTIDSVREELQMEVIDLQCNTVLRTKYDKVGVPDFYKHLWSSYPKYRSHCARMLSMFSSTHICEQLFSILKLSKKEAQWGAALQVAT.

Residues 95–189 (EACPGEAQLL…FLGAESQLGG (95 aa)) form a GTF2I-like 1 repeat. The segment at 199–222 (PTVPPNDSYGPVSVKTEPMEDSGT) is disordered. Residues 319–413 (LSGLEKIKQL…LPGLELSNVG (95 aa)) form a GTF2I-like 2 repeat.

It belongs to the TFII-I family. Ubiquitous.

Its subcellular location is the nucleus. The polypeptide is General transcription factor II-I repeat domain-containing protein 2 (Gtf2ird2) (Mus musculus (Mouse)).